Consider the following 98-residue polypeptide: Small ribosomal subunit protein bTHXm (98 aa).

The transit peptide at methionine 1 to proline 35 directs the protein to the mitochondrion. Residues aspartate 52–lysine 71 form a disordered region. Basic residues predominate over residues lysine 53–lysine 62.

The protein belongs to the bacterial ribosomal protein bTHX family. As to quaternary structure, component of the mitochondrial ribosome small subunit.

The protein localises to the mitochondrion. The sequence is that of Small ribosomal subunit protein bTHXm from Arabidopsis thaliana (Mouse-ear cress).